A 356-amino-acid chain; its full sequence is S-adenosylmethionine:tRNA ribosyltransferase-isomerase (356 aa).

This sequence belongs to the QueA family. In terms of assembly, monomer.

Its subcellular location is the cytoplasm. It carries out the reaction 7-aminomethyl-7-carbaguanosine(34) in tRNA + S-adenosyl-L-methionine = epoxyqueuosine(34) in tRNA + adenine + L-methionine + 2 H(+). It participates in tRNA modification; tRNA-queuosine biosynthesis. Transfers and isomerizes the ribose moiety from AdoMet to the 7-aminomethyl group of 7-deazaguanine (preQ1-tRNA) to give epoxyqueuosine (oQ-tRNA). This chain is S-adenosylmethionine:tRNA ribosyltransferase-isomerase, found in Shigella boydii serotype 4 (strain Sb227).